A 654-amino-acid polypeptide reads, in one-letter code: Chaperone protein HtpG (654 aa).

An a; substrate-binding region spans residues Met1–Arg344. The b stretch occupies residues Glu345–Arg556. The tract at residues Leu557–Ser654 is c.

Belongs to the heat shock protein 90 family. Homodimer.

The protein localises to the cytoplasm. Molecular chaperone. Has ATPase activity. This is Chaperone protein HtpG from Myxococcus xanthus (strain DK1622).